A 407-amino-acid polypeptide reads, in one-letter code: (R)-phenyllactyl-CoA dehydratase alpha subunit (407 aa).

A propeptide spanning residues 1–4 (MSDR) is cleaved from the precursor.

It belongs to the FldB/FldC dehydratase alpha/beta subunit family. Part of the heterotrimeric phenyllactate dehydratase complex FldABC, composed of (R)-phenyllactate CoA-transferase (FldA) and a heterodimeric (R)-phenyllactyl-CoA dehydratase (FldB and FldC). It depends on [4Fe-4S] cluster as a cofactor. Requires No flavin could be detected in the FldABC complex, and the addition of FAD, FMN or riboflavin to the dehydratase do not increase enzymatic activity. as cofactor.

It catalyses the reaction (R)-3-phenyllactoyl-CoA = (E)-cinnamoyl-CoA + H2O. The catalysed reaction is (R)-3-(4-hydroxyphenyl)lactoyl-CoA = (E)-4-coumaroyl-CoA + H2O. It carries out the reaction (R)-3-(indol-3-yl)lactoyl-CoA = (E)-3-(indol-3-yl)acryloyl-CoA + H2O. It functions in the pathway amino-acid degradation; L-phenylalanine degradation. Functionally, component of the phenyllactate dehydratase complex FldABC that is involved in the fermentation of L-phenylalanine via a Stickland reaction. This complex catalyzes the reversible syn-dehydration of (R)-phenyllactate to (E)-cinnamate in two steps, a CoA-transfer from cinnamoyl-CoA to phenyllactate, catalyzed by FldA, followed by the dehydration of phenyllactyl-CoA to cinnamoyl-CoA, catalyzed by FldB and FldC. Requires the activator FldI to initiate catalysis. The protein is (R)-phenyllactyl-CoA dehydratase alpha subunit of Clostridium sporogenes.